The sequence spans 837 residues: Enterin neuropeptides (837 aa).

The signal sequence occupies residues 1 to 25 (MAKHDVTVMTLLLVVCALHVFDAQG). The propeptide occupies 26–47 (TDVKLNDGFLRSGIMNIPFQRR). The residue at position 57 (Val-57) is a Valine amide. Residues 61–134 (SGFQSPVSPS…ENKRFSKENE (74 aa)) constitute a propeptide that is removed on maturation. At Val-146 the chain carries Valine amide. Residues 150–178 (MDLSALEKELIAKLKAADLLSPLETEAPG) constitute a propeptide that is removed on maturation. A Leucine amide modification is found at Leu-190. The propeptide occupies 194-201 (MPVDVFPR). Val-211 carries the post-translational modification Valine amide. A propeptide spanning residues 215–234 (SGNGENYFDDLDTFGDISQR) is cleaved from the precursor. The residue at position 244 (Val-244) is a Valine amide. Residues 248–266 (GNTDFSRNPLARLSQVQNR) constitute a propeptide that is removed on maturation. Val-276 carries the post-translational modification Valine amide. The propeptide occupies 280–285 (SVHNIV). A Valine amide modification is found at Val-297. Residues 301-325 (DFEDASEGLDEEEGDIDGYSDDLDV) constitute a propeptide that is removed on maturation. Residues Val-336, Val-348, Val-360, Val-372, Val-384, Val-396, Val-408, Val-420, Val-432, Val-444, Val-456, Val-468, Val-480, Val-492, Val-504, Val-516, Val-528, and Val-540 each carry the valine amide modification. A propeptide spanning residues 544–595 (ELGEDEINFLKEVDAADISRQLAEEDEKEAMVSVDDKETLSNEEDASEDDFE) is cleaved from the precursor. The tract at residues 567–594 (EEDEKEAMVSVDDKETLSNEEDASEDDF) is disordered. The segment covering 584–593 (SNEEDASEDD) has biased composition (acidic residues). Glu-598 bears the Pyrrolidone carboxylic acid (Glu); in form ENl' mark. Val-606 bears the Valine amide mark. Positions 610-627 (DEEGDMGVEMEEEMESEK) are excised as a propeptide. Leu-637 carries the post-translational modification Leucine amide. Gln-641 is subject to Pyrrolidone carboxylic acid. Position 649 is a valine amide (Val-649). The residue at position 653 (Gln-653) is a Pyrrolidone carboxylic acid. A valine amide mark is found at Val-661 and Val-673. Pyrrolidone carboxylic acid is present on Gln-677. Val-685 and Val-697 each carry valine amide. At Gln-701 the chain carries Pyrrolidone carboxylic acid. Val-709 is modified (valine amide). Position 713 is a pyrrolidone carboxylic acid (Gln-713). Val-721 bears the Valine amide mark. Position 725 is a pyrrolidone carboxylic acid (Gln-725). Val-733 bears the Valine amide mark. A propeptide spanning residues 734-837 (GKRSGAEDID…DSHIMATSST (104 aa)) is cleaved from the precursor. Residues 772–837 (GQPAAANEEE…DSHIMATSST (66 aa)) form a disordered region. Over residues 778–791 (NEEELQQEAAEESE) the composition is skewed to acidic residues.

High expression in gut and CNS.

The protein localises to the secreted. In terms of biological role, reduce interneurons B4/5 activity. May play a regulatory role in nonfeeding behaviors. The polypeptide is Enterin neuropeptides (ENPP) (Aplysia californica (California sea hare)).